Reading from the N-terminus, the 336-residue chain is tRNA-cytidine(32) 2-sulfurtransferase (336 aa).

A disordered region spans residues 1 to 42 (MNAPDTLTGLEANAPVTEEAPAASEAERKRAHTRREQKEQYE). The PP-loop motif signature appears at 75–80 (SGGKDS). Residues cysteine 150, cysteine 153, and cysteine 241 each coordinate [4Fe-4S] cluster. Positions 301–328 (PHGDIAFDEEPCSADSASNQTQRPSQTV) are disordered. The span at 315–328 (DSASNQTQRPSQTV) shows a compositional bias: polar residues.

The protein belongs to the TtcA family. As to quaternary structure, homodimer. It depends on Mg(2+) as a cofactor. Requires [4Fe-4S] cluster as cofactor.

Its subcellular location is the cytoplasm. It catalyses the reaction cytidine(32) in tRNA + S-sulfanyl-L-cysteinyl-[cysteine desulfurase] + AH2 + ATP = 2-thiocytidine(32) in tRNA + L-cysteinyl-[cysteine desulfurase] + A + AMP + diphosphate + H(+). Its pathway is tRNA modification. In terms of biological role, catalyzes the ATP-dependent 2-thiolation of cytidine in position 32 of tRNA, to form 2-thiocytidine (s(2)C32). The sulfur atoms are provided by the cysteine/cysteine desulfurase (IscS) system. The protein is tRNA-cytidine(32) 2-sulfurtransferase of Paraburkholderia phymatum (strain DSM 17167 / CIP 108236 / LMG 21445 / STM815) (Burkholderia phymatum).